The following is a 558-amino-acid chain: PE cleavage protein A (558 aa).

The 93-residue stretch at 1–93 (MSFLVVVPEF…SGSYAAAEAT (93 aa)) folds into the PE domain. Asp-297 is an active-site residue.

It belongs to the mycobacterial PE family. PGRS subfamily. Post-translationally, undergoes auto-proteolytic processing.

It localises to the secreted. Its subcellular location is the cell surface. Its function is as follows. Aspartic protease that processes the lipase LipY and other PE_PGRS proteins. Can also cleave itself. The polypeptide is PE cleavage protein A (Mycobacterium tuberculosis (strain CDC 1551 / Oshkosh)).